The primary structure comprises 243 residues: Small ribosomal subunit protein eS4 (243 aa).

One can recognise an S4 RNA-binding domain in the interval 37-99 (IPLALLLKHY…SDLYFRIVPD (63 aa)).

It belongs to the eukaryotic ribosomal protein eS4 family.

The protein is Small ribosomal subunit protein eS4 (rps4e) of Sulfurisphaera tokodaii (strain DSM 16993 / JCM 10545 / NBRC 100140 / 7) (Sulfolobus tokodaii).